We begin with the raw amino-acid sequence, 202 residues long: ATP-dependent Clp protease proteolytic subunit 1 (202 aa).

Serine 99 functions as the Nucleophile in the catalytic mechanism. Histidine 123 is an active-site residue.

It belongs to the peptidase S14 family. As to quaternary structure, fourteen ClpP subunits assemble into 2 heptameric rings which stack back to back to give a disk-like structure with a central cavity, resembling the structure of eukaryotic proteasomes.

The protein localises to the cytoplasm. It carries out the reaction Hydrolysis of proteins to small peptides in the presence of ATP and magnesium. alpha-casein is the usual test substrate. In the absence of ATP, only oligopeptides shorter than five residues are hydrolyzed (such as succinyl-Leu-Tyr-|-NHMec, and Leu-Tyr-Leu-|-Tyr-Trp, in which cleavage of the -Tyr-|-Leu- and -Tyr-|-Trp bonds also occurs).. In terms of biological role, cleaves peptides in various proteins in a process that requires ATP hydrolysis. Has a chymotrypsin-like activity. Plays a major role in the degradation of misfolded proteins. This Symbiobacterium thermophilum (strain DSM 24528 / JCM 14929 / IAM 14863 / T) protein is ATP-dependent Clp protease proteolytic subunit 1.